Consider the following 351-residue polypeptide: UDP-3-O-acylglucosamine N-acyltransferase (351 aa).

His-240 functions as the Proton acceptor in the catalytic mechanism.

It belongs to the transferase hexapeptide repeat family. LpxD subfamily. Homotrimer.

The catalysed reaction is a UDP-3-O-[(3R)-3-hydroxyacyl]-alpha-D-glucosamine + a (3R)-hydroxyacyl-[ACP] = a UDP-2-N,3-O-bis[(3R)-3-hydroxyacyl]-alpha-D-glucosamine + holo-[ACP] + H(+). Its pathway is bacterial outer membrane biogenesis; LPS lipid A biosynthesis. Its function is as follows. Catalyzes the N-acylation of UDP-3-O-acylglucosamine using 3-hydroxyacyl-ACP as the acyl donor. Is involved in the biosynthesis of lipid A, a phosphorylated glycolipid that anchors the lipopolysaccharide to the outer membrane of the cell. This Pseudomonas putida (strain ATCC 700007 / DSM 6899 / JCM 31910 / BCRC 17059 / LMG 24140 / F1) protein is UDP-3-O-acylglucosamine N-acyltransferase.